The following is a 254-amino-acid chain: Photosystem II 22 kDa protein 2, chloroplastic (254 aa).

The N-terminal 38 residues, 1 to 38 (MALQQSMAMPMMVVSGLGTAPRSSPMVQLQRMKKHLVV), are a transit peptide targeting the chloroplast. 2 consecutive repeat copies span residues 42-148 (FKSR…FVDD) and 149-253 (ATGL…DNDD). 4 helical membrane-spanning segments follow: residues 86–106 (VAMLGFAASLLGEAVTGKGIL), 120–140 (AEPLLLFFILFTLLGAIGALG), 184–204 (LFVGRLAQLGIAFSLIGEIIT), and 219–239 (PINEIEPLLLFNILFFFFAAI).

The protein belongs to the ELIP/psbS family.

It localises to the plastid. The protein localises to the chloroplast thylakoid membrane. Its function is as follows. Involved in high light-mediated energy-dependent nonphotochemical quenching (NPQ, qE) and thermal dissipation (TD) thus regulating energy conversion in photosystem II and protecting from photoinhibition. Also seems to regulate quantum yield of electron transport in fluctuating light conditions. The sequence is that of Photosystem II 22 kDa protein 2, chloroplastic from Oryza sativa subsp. indica (Rice).